The following is a 481-amino-acid chain: Aspartyl/glutamyl-tRNA(Asn/Gln) amidotransferase subunit B (481 aa).

The tract at residues S29–H50 is disordered.

The protein belongs to the GatB/GatE family. GatB subfamily. As to quaternary structure, heterotrimer of A, B and C subunits.

The enzyme catalyses L-glutamyl-tRNA(Gln) + L-glutamine + ATP + H2O = L-glutaminyl-tRNA(Gln) + L-glutamate + ADP + phosphate + H(+). The catalysed reaction is L-aspartyl-tRNA(Asn) + L-glutamine + ATP + H2O = L-asparaginyl-tRNA(Asn) + L-glutamate + ADP + phosphate + 2 H(+). Its function is as follows. Allows the formation of correctly charged Asn-tRNA(Asn) or Gln-tRNA(Gln) through the transamidation of misacylated Asp-tRNA(Asn) or Glu-tRNA(Gln) in organisms which lack either or both of asparaginyl-tRNA or glutaminyl-tRNA synthetases. The reaction takes place in the presence of glutamine and ATP through an activated phospho-Asp-tRNA(Asn) or phospho-Glu-tRNA(Gln). The protein is Aspartyl/glutamyl-tRNA(Asn/Gln) amidotransferase subunit B of Malacoplasma penetrans (strain HF-2) (Mycoplasma penetrans).